Here is a 264-residue protein sequence, read N- to C-terminus: NADH-quinone oxidoreductase subunit I 2 (264 aa).

2 4Fe-4S ferredoxin-type domains span residues 57-86 (GFLE…ISLE) and 98-127 (TQFD…HTRE). [4Fe-4S] cluster is bound by residues Cys-66, Cys-69, Cys-72, Cys-76, Cys-107, Cys-110, Cys-113, and Cys-117. The disordered stretch occupies residues 183–264 (APQFLPPEPP…AAPAANPESK (82 aa)). Positions 197–264 (AKPAAKAAPA…AAPAANPESK (68 aa)) are enriched in low complexity.

It belongs to the complex I 23 kDa subunit family. NDH-1 is composed of 14 different subunits. Subunits NuoA, H, J, K, L, M, N constitute the membrane sector of the complex. The cofactor is [4Fe-4S] cluster.

It is found in the cell inner membrane. It catalyses the reaction a quinone + NADH + 5 H(+)(in) = a quinol + NAD(+) + 4 H(+)(out). Its function is as follows. NDH-1 shuttles electrons from NADH, via FMN and iron-sulfur (Fe-S) centers, to quinones in the respiratory chain. The immediate electron acceptor for the enzyme in this species is believed to be ubiquinone. Couples the redox reaction to proton translocation (for every two electrons transferred, four hydrogen ions are translocated across the cytoplasmic membrane), and thus conserves the redox energy in a proton gradient. The polypeptide is NADH-quinone oxidoreductase subunit I 2 (Anaeromyxobacter dehalogenans (strain 2CP-C)).